A 392-amino-acid polypeptide reads, in one-letter code: Queuine tRNA-ribosyltransferase (392 aa).

The active-site Proton acceptor is the Asp-93. Residues 93–97, Asp-147, Gln-189, and Gly-216 contribute to the substrate site; that span reads DSGGY. Residues 247-253 are RNA binding; the sequence is GVGAPED. Catalysis depends on Asp-266, which acts as the Nucleophile. The tract at residues 271-275 is RNA binding; important for wobble base 34 recognition; that stretch reads TRVAR. Residues Cys-304, Cys-306, Cys-309, and His-335 each contribute to the Zn(2+) site.

The protein belongs to the queuine tRNA-ribosyltransferase family. As to quaternary structure, homodimer. Within each dimer, one monomer is responsible for RNA recognition and catalysis, while the other monomer binds to the replacement base PreQ1. Requires Zn(2+) as cofactor.

The catalysed reaction is 7-aminomethyl-7-carbaguanine + guanosine(34) in tRNA = 7-aminomethyl-7-carbaguanosine(34) in tRNA + guanine. It participates in tRNA modification; tRNA-queuosine biosynthesis. In terms of biological role, catalyzes the base-exchange of a guanine (G) residue with the queuine precursor 7-aminomethyl-7-deazaguanine (PreQ1) at position 34 (anticodon wobble position) in tRNAs with GU(N) anticodons (tRNA-Asp, -Asn, -His and -Tyr). Catalysis occurs through a double-displacement mechanism. The nucleophile active site attacks the C1' of nucleotide 34 to detach the guanine base from the RNA, forming a covalent enzyme-RNA intermediate. The proton acceptor active site deprotonates the incoming PreQ1, allowing a nucleophilic attack on the C1' of the ribose to form the product. After dissociation, two additional enzymatic reactions on the tRNA convert PreQ1 to queuine (Q), resulting in the hypermodified nucleoside queuosine (7-(((4,5-cis-dihydroxy-2-cyclopenten-1-yl)amino)methyl)-7-deazaguanosine). The chain is Queuine tRNA-ribosyltransferase from Dehalococcoides mccartyi (strain ATCC BAA-2266 / KCTC 15142 / 195) (Dehalococcoides ethenogenes (strain 195)).